Consider the following 306-residue polypeptide: Dihydroorotate dehydrogenase B (NAD(+)), catalytic subunit (306 aa).

Residues serine 22 and 46-47 (KT) each bind FMN. Substrate contacts are provided by residues lysine 46, 70-74 (NSIGL), and asparagine 128. Asparagine 128 contacts FMN. Cysteine 131 acts as the Nucleophile in catalysis. Lysine 164 contacts FMN. Residue 191 to 192 (NT) coordinates substrate. FMN-binding positions include glycine 216, 242–243 (GG), and 264–265 (GS).

This sequence belongs to the dihydroorotate dehydrogenase family. Type 1 subfamily. As to quaternary structure, heterotetramer of 2 PyrK and 2 PyrD type B subunits. It depends on FMN as a cofactor.

It is found in the cytoplasm. It catalyses the reaction (S)-dihydroorotate + NAD(+) = orotate + NADH + H(+). It participates in pyrimidine metabolism; UMP biosynthesis via de novo pathway; orotate from (S)-dihydroorotate (NAD(+) route): step 1/1. Its function is as follows. Catalyzes the conversion of dihydroorotate to orotate with NAD(+) as electron acceptor. This is Dihydroorotate dehydrogenase B (NAD(+)), catalytic subunit (pyrD) from Endomicrobium trichonymphae.